A 293-amino-acid polypeptide reads, in one-letter code: Xyloglucan endotransglucosylase/hydrolase protein 31 (293 aa).

Residues 1 to 20 form the signal peptide; it reads MALSLIFLALLVLCPSSGHS. A GH16 domain is found at 29–230; that stretch reads YPSSRVPTSP…YRYQPFVAKY (202 aa). Catalysis depends on glutamate 114, which acts as the Nucleophile. Glutamate 118 acts as the Proton donor in catalysis. Residues glutamate 118, 131-133, 141-148, and 209-210 contribute to the xyloglucan site; these read QTN, DRNVIGRE, and DW. Intrachain disulfides connect cysteine 238-cysteine 246 and cysteine 280-cysteine 293. Arginine 285 provides a ligand contact to xyloglucan.

The protein belongs to the glycosyl hydrolase 16 family. XTH group 3 subfamily. Interacts with XTH17. The formation of an XTH17-XTH31 dimer may be required for XET activity. Contains at least one intrachain disulfide bond essential for its enzymatic activity. As to expression, predominantly expressed in root. Weakly expressed in influorescence stems. Expressed in root tips and elongation zones, stems, young leaves, flowers and siliques. Expressed in root, hypocotyl, and etiolated whole seedlings.

Its subcellular location is the secreted. It localises to the cell wall. The protein localises to the extracellular space. It is found in the apoplast. The protein resides in the cell membrane. It catalyses the reaction breaks a beta-(1-&gt;4) bond in the backbone of a xyloglucan and transfers the xyloglucanyl segment on to O-4 of the non-reducing terminal glucose residue of an acceptor, which can be a xyloglucan or an oligosaccharide of xyloglucan.. The enzyme catalyses xyloglucan + H2O = xyloglucan oligosaccharides.. Functionally, catalyzes xyloglucan endohydrolysis (XEH) and/or endotransglycosylation (XET). Cleaves and religates xyloglucan polymers, an essential constituent of the primary cell wall, and thereby participates in cell wall construction of growing tissues. Involved in the accumulation of hemicelluloses. Has a high XEH activity and only a slight XET activity in vitro, but the main in planta activity seems to be XET, thus controlling aluminum sensitivity. Acceptor preferences are XXXGol = XXFGol &gt; XXLGol &gt; XLLGol = XLFGol. The protein is Xyloglucan endotransglucosylase/hydrolase protein 31 of Arabidopsis thaliana (Mouse-ear cress).